Here is a 109-residue protein sequence, read N- to C-terminus: Elicitor peptide 2 (109 aa).

The propeptide occupies 1–73 (MEKLDKRREE…KDDDVVVLLR (73 aa)). Residues 74–88 (DNKAKSKKRDKEKPS) are compositionally biased toward basic and acidic residues. The interval 74–109 (DNKAKSKKRDKEKPSSGRPGQTNSVPNAAIQVYKED) is disordered.

It belongs to the brassicaceae elicitor peptide family.

Its function is as follows. Elicitor of plant defense. This Arabidopsis thaliana (Mouse-ear cress) protein is Elicitor peptide 2 (PEP2).